The sequence spans 197 residues: Ion-translocating oxidoreductase complex subunit B (197 aa).

The hydrophobic stretch occupies residues 1–26 (MSTILIAIIALAALAAVFGAILGFAS). A 4Fe-4S domain is found at 32–90 (EADPIVDQIDSILPQTQCGQCGYPGCRPYAEAIANGDQINKCPPGGQATIEKLADLMGV). Positions 49, 52, 57, 73, 114, 117, 120, 124, 144, 147, 150, and 154 each coordinate [4Fe-4S] cluster. 4Fe-4S ferredoxin-type domains are found at residues 105-134 (TVAFIHEDMCIGCTKCIQACPVDAIVGGTK) and 135-164 (ALHTVIKDECTGCDLCVAPCPTDCIEMIPV).

Belongs to the 4Fe4S bacterial-type ferredoxin family. RnfB subfamily. In terms of assembly, the complex is composed of six subunits: RnfA, RnfB, RnfC, RnfD, RnfE and RnfG. It depends on [4Fe-4S] cluster as a cofactor.

It localises to the cell inner membrane. In terms of biological role, part of a membrane-bound complex that couples electron transfer with translocation of ions across the membrane. This chain is Ion-translocating oxidoreductase complex subunit B, found in Vibrio campbellii (strain ATCC BAA-1116).